Reading from the N-terminus, the 537-residue chain is MELCSSSPSSSLLRICSSSAPEISFSSSISQFPSKTQSILTKSRFQNLRICASVTAETQGLPRDSPQRLLKELAQRKTATGPKKKVPPKRFILRPPLDDKKLAERFLNSPQLSLKSFPLLSSCLPSSKLNNADKTWIDEYLLEVKQALGYSLEPSESLGDDNPAKHFDTLLYLAFQHPSCDRARARHVKNGHSRLWFLGQYVLELALTEFFLQRYPRESPGPMRERVFALIGKRYLPKWIKAASLQNLIFPYDDMDKLIRKEREPPVKSVFWALFGAIYLCFGMPEVYRVLFEVFGMDPDADECQPRSRRQLEDVDYVSVEFEGKKLGWQDIATYKPPEDALFAHPRLFRACVPPGMHRFRGNIWDFDSKPKVMQTLGYPLTMNDRIKEITEARNIELGLGLQLCFLHPSKHKFEHPRFCFERLEYVGQKIQDIAMAERLLMKHLDAPGKWLQEKHRRLLMNKFCGRYLREKRLHNFIIYSEEVHDRYEHNRRLRNPATTAVQQAIHGLAYTIYGKPDVRRLMFEVFDFEQIQPKAV.

The N-terminal 51 residues, 1-51 (MELCSSSPSSSLLRICSSSAPEISFSSSISQFPSKTQSILTKSRFQNLRIC), are a transit peptide targeting the chloroplast. RNase III domains are found at residues 141–283 (LLEV…LCFG) and 415–515 (EHPR…TIYG).

Interacts with RNA. Part of large ribonucleo-protein particles that contain CAF1 and/or CAF2.

It localises to the plastid. It is found in the chloroplast. Binds specific group II introns in chloroplasts and facilitates their splicing. Acts on both subgroup IIA and subgroup IIB introns. The substrates of the subgroup II also require the CRM domain proteins CAF1 or CAF2. Binds both single-stranded and double-stranded RNA non-specifically, but lacks endonuclease activity. Required for plastid ribosome biogenesis. The sequence is that of Ribonuclease III domain-containing protein RNC1, chloroplastic from Arabidopsis thaliana (Mouse-ear cress).